The sequence spans 210 residues: Orotate phosphoribosyltransferase (210 aa).

Residues arginine 94, lysine 98, histidine 100, and glutamate 120–serine 128 each bind 5-phospho-alpha-D-ribose 1-diphosphate. Position 124 (serine 124) interacts with orotate.

This sequence belongs to the purine/pyrimidine phosphoribosyltransferase family. PyrE subfamily. In terms of assembly, homodimer. Requires Mg(2+) as cofactor.

The catalysed reaction is orotidine 5'-phosphate + diphosphate = orotate + 5-phospho-alpha-D-ribose 1-diphosphate. It functions in the pathway pyrimidine metabolism; UMP biosynthesis via de novo pathway; UMP from orotate: step 1/2. Catalyzes the transfer of a ribosyl phosphate group from 5-phosphoribose 1-diphosphate to orotate, leading to the formation of orotidine monophosphate (OMP). This Bacillus cereus (strain ATCC 14579 / DSM 31 / CCUG 7414 / JCM 2152 / NBRC 15305 / NCIMB 9373 / NCTC 2599 / NRRL B-3711) protein is Orotate phosphoribosyltransferase.